A 301-amino-acid chain; its full sequence is Glycine--tRNA ligase alpha subunit (301 aa).

Belongs to the class-II aminoacyl-tRNA synthetase family. In terms of assembly, tetramer of two alpha and two beta subunits.

The protein resides in the cytoplasm. It catalyses the reaction tRNA(Gly) + glycine + ATP = glycyl-tRNA(Gly) + AMP + diphosphate. The protein is Glycine--tRNA ligase alpha subunit of Shewanella loihica (strain ATCC BAA-1088 / PV-4).